The chain runs to 616 residues: FNIP repeat-containing protein DDB_G0290639 (616 aa).

The stretch at 239–274 forms a coiled coil; that stretch reads FENNNNNNNNNNNNNNNNNNNNNNNNNNNNNKKTEK. Low complexity predominate over residues 241 to 269; that stretch reads NNNNNNNNNNNNNNNNNNNNNNNNNNNNN. The segment at 241–270 is disordered; sequence NNNNNNNNNNNNNNNNNNNNNNNNNNNNNK. FNIP repeat units follow at residues 337–379, 380–421, 423–464, 466–508, 509–550, and 552–593; these read FEES…FNDG, FNQS…KLCN, FSQP…VFYD, FNQL…FSDG, FNQT…LIDS, and FQQP…ILDK.

This Dictyostelium discoideum (Social amoeba) protein is FNIP repeat-containing protein DDB_G0290639.